A 333-amino-acid chain; its full sequence is Phosphate acyltransferase (333 aa).

Belongs to the PlsX family. Homodimer. Probably interacts with PlsY.

It is found in the cytoplasm. It carries out the reaction a fatty acyl-[ACP] + phosphate = an acyl phosphate + holo-[ACP]. The protein operates within lipid metabolism; phospholipid metabolism. Functionally, catalyzes the reversible formation of acyl-phosphate (acyl-PO(4)) from acyl-[acyl-carrier-protein] (acyl-ACP). This enzyme utilizes acyl-ACP as fatty acyl donor, but not acyl-CoA. The chain is Phosphate acyltransferase from Aliarcobacter butzleri (strain RM4018) (Arcobacter butzleri).